We begin with the raw amino-acid sequence, 334 residues long: Protein NlpD/LppB homolog (334 aa).

Residues 89-133 (IFYIVKSKDTMYSIAKNSGYNYHELSKFNSIKKPYKIIIGQKIWM) enclose the LysM domain.

It belongs to the E.coli NlpD/Haemophilus LppB family.

This is Protein NlpD/LppB homolog from Buchnera aphidicola subsp. Acyrthosiphon pisum (strain APS) (Acyrthosiphon pisum symbiotic bacterium).